The chain runs to 573 residues: Protein translocase subunit SecD (573 aa).

Residues 13–33 (YLSVFLVMLIGIYLLVFFTGD) form a helical membrane-spanning segment. The disordered stretch occupies residues 127–200 (AQPAAEEPQP…PPAEAPATDP (74 aa)). 2 stretches are compositionally biased toward pro residues: residues 135-154 (QPAP…PPPA) and 161-194 (SPQP…PPAE). A run of 5 helical transmembrane segments spans residues 385 to 405 (AGMI…LLYY), 410 to 430 (LLTA…LVLL), 441 to 461 (AGIA…VVFF), 489 to 509 (IVSG…LAIG), and 514 to 534 (FAFT…LVTW).

Belongs to the SecD/SecF family. SecD subfamily. Forms a complex with SecF. Part of the essential Sec protein translocation apparatus which comprises SecA, SecYEG and auxiliary proteins SecDF. Other proteins may also be involved.

Its subcellular location is the cell membrane. Part of the Sec protein translocase complex. Interacts with the SecYEG preprotein conducting channel. SecDF uses the proton motive force (PMF) to complete protein translocation after the ATP-dependent function of SecA. The protein is Protein translocase subunit SecD of Mycobacterium tuberculosis (strain CDC 1551 / Oshkosh).